Here is a 544-residue protein sequence, read N- to C-terminus: CTP synthase (544 aa).

Residues 1 to 267 (MSKFVFVTGG…GDLLVSRLHL (267 aa)) form an amidoligase domain region. Position 13 (serine 13) interacts with CTP. Position 13 (serine 13) interacts with UTP. 14 to 19 (SVGKGI) contacts ATP. Tyrosine 54 lines the L-glutamine pocket. Aspartate 71 provides a ligand contact to ATP. Aspartate 71 and glutamate 141 together coordinate Mg(2+). CTP is bound by residues 148–150 (DIE), 188–193 (KTKPTQ), and lysine 224. Residues 188 to 193 (KTKPTQ) and lysine 224 contribute to the UTP site. Positions 299-534 (YVELKDAYYS…INAAKKVIRD (236 aa)) constitute a Glutamine amidotransferase type-1 domain. Glycine 354 contacts L-glutamine. The active-site Nucleophile; for glutamine hydrolysis is the cysteine 381. L-glutamine is bound by residues 382–385 (LGMQ), glutamate 405, and arginine 462. Catalysis depends on residues histidine 507 and glutamate 509.

The protein belongs to the CTP synthase family. As to quaternary structure, homotetramer.

It catalyses the reaction UTP + L-glutamine + ATP + H2O = CTP + L-glutamate + ADP + phosphate + 2 H(+). The enzyme catalyses L-glutamine + H2O = L-glutamate + NH4(+). The catalysed reaction is UTP + NH4(+) + ATP = CTP + ADP + phosphate + 2 H(+). It participates in pyrimidine metabolism; CTP biosynthesis via de novo pathway; CTP from UDP: step 2/2. With respect to regulation, allosterically activated by GTP, when glutamine is the substrate; GTP has no effect on the reaction when ammonia is the substrate. The allosteric effector GTP functions by stabilizing the protein conformation that binds the tetrahedral intermediate(s) formed during glutamine hydrolysis. Inhibited by the product CTP, via allosteric rather than competitive inhibition. Functionally, catalyzes the ATP-dependent amination of UTP to CTP with either L-glutamine or ammonia as the source of nitrogen. Regulates intracellular CTP levels through interactions with the four ribonucleotide triphosphates. In Dehalococcoides mccartyi (strain ATCC BAA-2266 / KCTC 15142 / 195) (Dehalococcoides ethenogenes (strain 195)), this protein is CTP synthase.